Here is a 164-residue protein sequence, read N- to C-terminus: MAEETAEKPVVESFQLDHTKVKAPYVRYIDTETGPHGDVISNYDLRLTQPNEQAIPTGGLHTIEHTIAVLLRERIPGYIDCSPFGCRTGFHLLTWGTHSTEDVAKALKESLEFIAYKATWDDVPATTEKSCGNYRDHSLFTAKEWAKLILEEGISSDPFERKVV.

Fe cation-binding residues include histidine 61, histidine 65, and cysteine 131.

The protein belongs to the LuxS family. As to quaternary structure, homodimer. The cofactor is Fe cation.

The enzyme catalyses S-(5-deoxy-D-ribos-5-yl)-L-homocysteine = (S)-4,5-dihydroxypentane-2,3-dione + L-homocysteine. In terms of biological role, involved in the synthesis of autoinducer 2 (AI-2) which is secreted by bacteria and is used to communicate both the cell density and the metabolic potential of the environment. The regulation of gene expression in response to changes in cell density is called quorum sensing. Catalyzes the transformation of S-ribosylhomocysteine (RHC) to homocysteine (HC) and 4,5-dihydroxy-2,3-pentadione (DPD). This Bifidobacterium longum (strain NCC 2705) protein is S-ribosylhomocysteine lyase.